The following is a 173-amino-acid chain: Shikimate kinase (173 aa).

16–21 (GSGKTT) is a binding site for ATP. Residue Thr20 participates in Mg(2+) binding. Residues Asp38, Arg62, and Gly83 each coordinate substrate. Arg120 provides a ligand contact to ATP. A substrate-binding site is contributed by Arg139. Arg156 serves as a coordination point for ATP.

Belongs to the shikimate kinase family. As to quaternary structure, monomer. Mg(2+) serves as cofactor.

Its subcellular location is the cytoplasm. It carries out the reaction shikimate + ATP = 3-phosphoshikimate + ADP + H(+). It participates in metabolic intermediate biosynthesis; chorismate biosynthesis; chorismate from D-erythrose 4-phosphate and phosphoenolpyruvate: step 5/7. Functionally, catalyzes the specific phosphorylation of the 3-hydroxyl group of shikimic acid using ATP as a cosubstrate. This Corynebacterium diphtheriae (strain ATCC 700971 / NCTC 13129 / Biotype gravis) protein is Shikimate kinase.